Consider the following 1351-residue polypeptide: MQSQVRLPSNGNPALSFPQNEIGGPVHWKTYLEGCSPCSFPSLRTVCPSQSWPASVSITIGDSIFRRLEHFSDKTGISVATVFRASWGLVLRIYTGQDSVCFGDMTTAPGGIDAIGCVGVCRVELSDTAVISKVLQRIQAASANKLAIPHVPLSDAVLSKCMPSASLFNTCMLISGGGERPEKTSSTFEKVELGYDDQYDIIVRGSVEDSGASAALSYRTSFLSEEQATSIANTFERAVSDLIGIENRIGQICFLSDLDKSQIYTWNKDPPLRAHSCVDTLIHERCLSQPTASAVNAWDGELSYEELNHLSSKLSRHLVTLGVGAEVFVPLCFEKSRWTTVAMLAVIKAGGAFVLLDPSHPAERLLSICQKVSARLIVASAQHAKLAEDLVTSIVEVGDDKADWLTDKGIKAQTQTRTRRSAAPGDALYAVFTSGSTGTPKGVIIEHGSFHAAVFPYTEAVGLNQESRVFQFSSYAFDVTIFDTLMTLISGGCVCVPSNTERWSDVANAIQRFRVTHSSLTPTVARILDPKDVLTLRTLVLGGEKLVTSDITKWVDQVRLVHLYGASECPIMSIQSMTGVASDFQTTDHATGSNCWIVDPNNHDRLVPIGTIGELVIEGTIVGRGYLDDPEKSSATFIRPPGWLCQVRGSGYHSAVYKSGDLVQYTADGSLRYIGRKDTQVKLRGQRVELGEVEHHVKLTFPNATDVVVELVVTIHASSSRAPILVAFVLISHEADPDPESIRTGRGEGLSQILSEPTDRFCSQIPIVQSQLQQSLPSYMVPGIFLPLMTLPLTSTDKINRKLLRELAGALSREELESYQPSTGPVRAPQTTTEKLLQQYFARVLNIPVEQVGADDHFFQRGGDSLTAMKLVAMARKDKHKLTVQDIFDSPRLSALACVVRSGKVDGNKEPPLEPFSLVNKHRDIIRAAAQQCQLPVRVIEDVYPCTPLQRGLISETLRDSKAFIAHLAVSLPPDIDLQRLQEAWTTVANANPILRTRMVLSASHGLLQVVVREDIRWIVSKNAEAQDFFVGVGKPLVQLVLCCHREGNEVPVQLLLMVHHAVYDGYTLPLIFEQVKAAYNGGTLAPRPAVPFIRYVQSIPDGTGYWNSLMANLQTPIFPALPSKSYQPLPNAIMRHTIITPGSHRQYTPSTYVRLAWAITQAYHQGTCDIFFGTVVSGRNAPVTDIELMTIPTVATIPCRVTLDFQSLVQSALRKIQDDAISGIPFEQLGLPHIRRLGEHAMLACSFQTLLSIQPALPPSTDAWFEQPGSTIDYRANATYAINLFFGLEGDKLKATALYDFNVVKKDKMQSMLVDFGNILQTMHKSPNSLIRDILAVPQQMRGPINSASL.

The tract at residues 285-684 is adenylation (A) domain; that stretch reads RCLSQPTASA…GRKDTQVKLR (400 aa). Residues 828 to 904 form the Carrier domain; the sequence is APQTTTEKLL…ALACVVRSGK (77 aa). S865 bears the O-(pantetheine 4'-phosphoryl)serine mark. Residues 941-1340 form a condensation (C) domain region; sequence EDVYPCTPLQ…LIRDILAVPQ (400 aa).

This sequence belongs to the NRP synthetase family.

Its pathway is alkaloid biosynthesis; ergot alkaloid biosynthesis. D-lysergyl-peptide-synthetase subunit 2; part of the gene cluster that mediates the biosynthesis of fungal ergot alkaloid ergovaline, the predominant ergopeptine product in E.festucae var. lolii. DmaW catalyzes the first step of ergot alkaloid biosynthesis by condensing dimethylallyl diphosphate (DMAP) and tryptophan to form 4-dimethylallyl-L-tryptophan. The second step is catalyzed by the methyltransferase easF that methylates 4-dimethylallyl-L-tryptophan in the presence of S-adenosyl-L-methionine, resulting in the formation of 4-dimethylallyl-L-abrine. The catalase easC and the FAD-dependent oxidoreductase easE then transform 4-dimethylallyl-L-abrine to chanoclavine-I which is further oxidized by easD in the presence of NAD(+), resulting in the formation of chanoclavine-I aldehyde. Agroclavine dehydrogenase easG then mediates the conversion of chanoclavine-I aldehyde to agroclavine via a non-enzymatic adduct reaction: the substrate is an iminium intermediate that is formed spontaneously from chanoclavine-I aldehyde in the presence of glutathione. The presence of easA is not required to complete this reaction. Further conversion of agroclavine to paspalic acid is a two-step process involving oxidation of agroclavine to elymoclavine and of elymoclavine to paspalic acid, the second step being performed by the elymoclavine oxidase cloA. Paspalic acid is then further converted to D-lysergic acid. Ergovaline is assembled from D-lysergic acid and three different amino acids by the D-lysergyl-peptide-synthetase composed of a monomudular (lpsB) and a trimodular (lpsA) nonribosomal peptide synthetase subunit. This Epichloe festucae var. lolii (Neotyphodium lolii) protein is D-lysergyl-peptide-synthetase subunit 2.